Here is a 304-residue protein sequence, read N- to C-terminus: Oxygen-dependent coproporphyrinogen-III oxidase (304 aa).

S94 contributes to the substrate binding site. 2 residues coordinate a divalent metal cation: H98 and H108. Residue H108 is the Proton donor of the active site. 110–112 (NVR) is a substrate binding site. The a divalent metal cation site is built by H147 and H177. An important for dimerization region spans residues 242–277 (YVEFNLVYDRGTLFGLQTGGRTESILMSMPPLVRWE). 260-262 (GGR) contributes to the substrate binding site.

It belongs to the aerobic coproporphyrinogen-III oxidase family. In terms of assembly, homodimer. Requires a divalent metal cation as cofactor.

The protein localises to the cytoplasm. The catalysed reaction is coproporphyrinogen III + O2 + 2 H(+) = protoporphyrinogen IX + 2 CO2 + 2 H2O. It functions in the pathway porphyrin-containing compound metabolism; protoporphyrin-IX biosynthesis; protoporphyrinogen-IX from coproporphyrinogen-III (O2 route): step 1/1. In terms of biological role, involved in the heme biosynthesis. Catalyzes the aerobic oxidative decarboxylation of propionate groups of rings A and B of coproporphyrinogen-III to yield the vinyl groups in protoporphyrinogen-IX. The chain is Oxygen-dependent coproporphyrinogen-III oxidase from Shewanella pealeana (strain ATCC 700345 / ANG-SQ1).